Consider the following 934-residue polypeptide: uncharacterized protein (934 aa).

The N-terminal stretch at 1 to 24 (MKLKKRYLLLGSTLTVSAALILSA) is a signal peptide. A lipid anchor (N-palmitoyl cysteine) is attached at C25. Residue C25 is the site of S-diacylglycerol cysteine attachment. A disordered region spans residues 111–131 (SGLKGRAQKNGSTDSSDGSSK). A compositionally biased stretch (polar residues) spans 119 to 131 (KNGSTDSSDGSSK).

It is found in the cell membrane. This is an uncharacterized protein from Mycoplasma genitalium (strain ATCC 33530 / DSM 19775 / NCTC 10195 / G37) (Mycoplasmoides genitalium).